A 342-amino-acid chain; its full sequence is UV excision repair protein RAD23 homolog (342 aa).

The region spanning 1–76 (MKVTIKNINK…IVMMIKKPRE (76 aa)) is the Ubiquitin-like domain. The segment covering 77–151 (APATTPAPST…TPGSTSTTSP (75 aa)) has biased composition (low complexity). Positions 77–157 (APATTPAPST…TTSPQQSSDF (81 aa)) are disordered. 2 UBA domains span residues 161 to 201 (TELE…LVSG) and 297 to 338 (QEES…LFET).

Belongs to the RAD23 family.

It localises to the nucleus. The protein resides in the cytoplasm. May play a role both in proteasomal degradation of misfolded proteins and DNA repair. The sequence is that of UV excision repair protein RAD23 homolog (rcbA) from Dictyostelium discoideum (Social amoeba).